A 152-amino-acid polypeptide reads, in one-letter code: Transcriptional regulator MraZ (152 aa).

SpoVT-AbrB domains lie at 5–52 (VTSI…PLHE) and 81–124 (ATEC…QDKQ).

This sequence belongs to the MraZ family. As to quaternary structure, forms oligomers.

It localises to the cytoplasm. The protein resides in the nucleoid. The sequence is that of Transcriptional regulator MraZ from Actinobacillus pleuropneumoniae serotype 5b (strain L20).